A 284-amino-acid chain; its full sequence is 4-diphosphocytidyl-2-C-methyl-D-erythritol kinase (284 aa).

Residue K14 is part of the active site. 98–108 (PMGGGLGGGSS) lines the ATP pocket. The active site involves D140.

The protein belongs to the GHMP kinase family. IspE subfamily.

It carries out the reaction 4-CDP-2-C-methyl-D-erythritol + ATP = 4-CDP-2-C-methyl-D-erythritol 2-phosphate + ADP + H(+). It participates in isoprenoid biosynthesis; isopentenyl diphosphate biosynthesis via DXP pathway; isopentenyl diphosphate from 1-deoxy-D-xylulose 5-phosphate: step 3/6. Its function is as follows. Catalyzes the phosphorylation of the position 2 hydroxy group of 4-diphosphocytidyl-2C-methyl-D-erythritol. The sequence is that of 4-diphosphocytidyl-2-C-methyl-D-erythritol kinase from Shewanella baltica (strain OS223).